The sequence spans 404 residues: Probable protein phosphatase 2C 30 (404 aa).

Positions 42 to 52 (AERGAEEETSG) are enriched in basic and acidic residues. The tract at residues 42-72 (AERGAEEETSGKRRRLDGGGGEASTDEEDRE) is disordered. The PPM-type phosphatase domain maps to 77-399 (RYGFTSVCGR…DNVSVVVVNL (323 aa)). Residues Asp111, Gly112, and Asp298 each contribute to the Mn(2+) site. Positions 321–369 (GRRERNRSSPTSNLSPRQSSSSGDEAPNDGAPSAAAGSESDEESAAEED) are disordered. Residues 330-343 (PTSNLSPRQSSSSG) are compositionally biased toward polar residues. Asp390 provides a ligand contact to Mn(2+).

It belongs to the PP2C family. As to quaternary structure, interacts with PYL5 and SAPK2. Binding to PYL5 is dependent on the presence of abscisic acid (ABA). Interacts with PYL3, PYL5 and PYL9. Binding to PYL5 and PYL9 is dependent on the presence of ABA. Mg(2+) serves as cofactor. Mn(2+) is required as a cofactor.

Its subcellular location is the nucleus. The enzyme catalyses O-phospho-L-seryl-[protein] + H2O = L-seryl-[protein] + phosphate. It carries out the reaction O-phospho-L-threonyl-[protein] + H2O = L-threonyl-[protein] + phosphate. In terms of biological role, together with ABI5, PYL5 and SAPK2, is part of an abscisic acid (ABA) signaling unit that modulates seed germination and early seedling growth. The polypeptide is Probable protein phosphatase 2C 30 (Oryza sativa subsp. japonica (Rice)).